We begin with the raw amino-acid sequence, 85 residues long: Ice-structuring protein 4 (85 aa).

An N-terminal signal peptide occupies residues 1–21 (MRITEANPDPDAKAVPAAAAP).

The protein belongs to the type-I AFP family.

The protein resides in the secreted. Functionally, contributes to protect fish blood from freezing at subzero sea water temperatures. Lowers the blood freezing point. Binds to nascent ice crystals and prevents further growth. The chain is Ice-structuring protein 4 from Pseudopleuronectes americanus (Winter flounder).